Here is a 497-residue protein sequence, read N- to C-terminus: Cytochrome P450 CYP94D108 (497 aa).

Residues 6 to 26 form a helical membrane-spanning segment; the sequence is LLSLALLLLAAAAAAAFVLFP. Residue C439 participates in heme binding.

The protein belongs to the cytochrome P450 family. As to expression, mainly expressed in roots and, at low levels, in leaves, fruits and stems.

Its subcellular location is the membrane. Its pathway is steroid metabolism; cholesterol metabolism. Functionally, involved in the biosynthesis of spiroketal steroid and saponin natural products from cholesterol such as diosgenin and analogs (e.g. furostanol and spirostanol), plant defense compounds used as main precursors for the industrial production of steroid hormones. During the 5,6-spiroketalization of cholesterol, may catalyze the 27-monohydroxylation of furostanol-type steroid to an intermediate product that undergoes a stereospecific formation of the terminal heterocycle to yield diosgenin. This chain is Cytochrome P450 CYP94D108, found in Paris polyphylla (Daiswa polyphylla).